The primary structure comprises 319 residues: Structure-specific endonuclease subunit SLX1 (319 aa).

One can recognise a GIY-YIG domain in the interval 20–103 (TFYCCYLLQS…QHGYKTHYIP (84 aa)). An SLX1-type zinc finger spans residues 233-297 (CNLCGQCYDY…LPNFCMCPGC (65 aa)).

It belongs to the SLX1 family. As to quaternary structure, forms a heterodimer with SLX4. A divalent metal cation serves as cofactor.

Its subcellular location is the nucleus. Its function is as follows. Catalytic subunit of the SLX1-SLX4 structure-specific endonuclease that resolves DNA secondary structures generated during DNA repair and recombination. Has endonuclease activity towards branched DNA substrates, introducing single-strand cuts in duplex DNA close to junctions with ss-DNA. The sequence is that of Structure-specific endonuclease subunit SLX1 from Vanderwaltozyma polyspora (strain ATCC 22028 / DSM 70294 / BCRC 21397 / CBS 2163 / NBRC 10782 / NRRL Y-8283 / UCD 57-17) (Kluyveromyces polysporus).